The chain runs to 104 residues: Large ribosomal subunit protein uL24 (104 aa).

Belongs to the universal ribosomal protein uL24 family. As to quaternary structure, part of the 50S ribosomal subunit.

Its function is as follows. One of two assembly initiator proteins, it binds directly to the 5'-end of the 23S rRNA, where it nucleates assembly of the 50S subunit. In terms of biological role, one of the proteins that surrounds the polypeptide exit tunnel on the outside of the subunit. The polypeptide is Large ribosomal subunit protein uL24 (Flavobacterium johnsoniae (strain ATCC 17061 / DSM 2064 / JCM 8514 / BCRC 14874 / CCUG 350202 / NBRC 14942 / NCIMB 11054 / UW101) (Cytophaga johnsonae)).